The following is a 440-amino-acid chain: Chromosome partition protein MukF (440 aa).

The leucine-zipper stretch occupies residues 208 to 236 (LSETSGTLRELQDTLEAAGDKLQANLLRI).

This sequence belongs to the MukF family. In terms of assembly, interacts, and probably forms a ternary complex, with MukE and MukB via its C-terminal region. The complex formation is stimulated by calcium or magnesium. It is required for an interaction between MukE and MukB.

Its subcellular location is the cytoplasm. The protein localises to the nucleoid. In terms of biological role, involved in chromosome condensation, segregation and cell cycle progression. May participate in facilitating chromosome segregation by condensation DNA from both sides of a centrally located replisome during cell division. Not required for mini-F plasmid partitioning. Probably acts via its interaction with MukB and MukE. Overexpression results in anucleate cells. It has a calcium binding activity. This is Chromosome partition protein MukF from Escherichia coli (strain ATCC 8739 / DSM 1576 / NBRC 3972 / NCIMB 8545 / WDCM 00012 / Crooks).